A 1088-amino-acid chain; its full sequence is RNA-directed RNA polymerase (1088 aa).

The 187-residue stretch at Leu-501–Ile-687 folds into the RdRp catalytic domain.

It belongs to the reoviridae RNA-directed RNA polymerase family. In terms of assembly, interacts with VP3 (Potential). Interacts with VP2; this interaction activates VP1. Interacts with NSP5; this interaction is probably necessary for the formation of functional virus factories. Interacts with NSP2; this interaction is weak. It depends on Mg(2+) as a cofactor.

It is found in the virion. The catalysed reaction is RNA(n) + a ribonucleoside 5'-triphosphate = RNA(n+1) + diphosphate. RNA-directed RNA polymerase that is involved in both transcription and genome replication. Together with VP3 capping enzyme, forms an enzyme complex positioned near the channels situated at each of the five-fold vertices of the core. Following infection, the outermost layer of the virus is lost, leaving a double-layered particle (DLP) made up of the core and VP6 shell. VP1 then catalyzes the transcription of fully conservative plus-strand genomic RNAs that are extruded through the DLP's channels into the cytoplasm where they function as mRNAs for translation of viral proteins. One copy of each of the viral (+)RNAs is also recruited during core assembly, together with newly synthesized polymerase complexes and VP2. The polymerase of these novo-formed particles catalyzes the synthesis of complementary minus-strands leading to dsRNA formation. To do so, the polymerase specifically recognizes and binds 4 bases 5'-UGUG-3' in the conserved 3'-sequence of plus-strand RNA templates. VP2 presumably activates the autoinhibited VP1-RNA complex to coordinate packaging and genome replication. Once dsRNA synthesis is complete, the polymerase switches to the transcriptional mode, thus providing secondary transcription. The chain is RNA-directed RNA polymerase from Homo sapiens (Human).